Here is a 390-residue protein sequence, read N- to C-terminus: Elongation factor Tu 1 (390 aa).

The tr-type G domain occupies 10-201 (KPHVNVGTIG…LDEYVAVPPR (192 aa)). Residues 19–26 (GHVDHGKT) form a G1 region. GTP is bound at residue 19–26 (GHVDHGKT). Mg(2+) is bound at residue Thr26. The interval 55–59 (GITIA) is G2. A G3 region spans residues 76–79 (DCPG). Residues 76-80 (DCPGH) and 131-134 (NKAD) each bind GTP. Residues 131–134 (NKAD) form a G4 region. Positions 168–170 (SAL) are G5.

It belongs to the TRAFAC class translation factor GTPase superfamily. Classic translation factor GTPase family. EF-Tu/EF-1A subfamily. Monomer.

The protein localises to the cytoplasm. The catalysed reaction is GTP + H2O = GDP + phosphate + H(+). In terms of biological role, GTP hydrolase that promotes the GTP-dependent binding of aminoacyl-tRNA to the A-site of ribosomes during protein biosynthesis. The chain is Elongation factor Tu 1 from Wolbachia pipientis wMel.